We begin with the raw amino-acid sequence, 453 residues long: Serine incorporator 1 (453 aa).

The N-myristoyl glycine moiety is linked to residue Gly2. Residues 2 to 39 (GSVLGLCSVASWIPCLCGSAPCLLCRCCPSGNNSTVTR) lie on the Cytoplasmic side of the membrane. The chain crosses the membrane as a helical span at residues 40 to 60 (LIYALFLLVGVCVACVMLIPG). Topologically, residues 61–88 (MEEQLNKIPGFCENEKGVVPCNILVGYK) are lumenal. A helical transmembrane segment spans residues 89–109 (AVYRLCFGLAMFYLLLSLLMI). Over 110–123 (KVKSSSDPRAAVHN) the chain is Cytoplasmic. The chain crosses the membrane as a helical span at residues 124–144 (GFWFFKFATAVAIIIGAFFIP). Over 145–151 (EGTFTTV) the chain is Lumenal. Residues 152–172 (WFYVGMAGAFCFILIQLVLLI) form a helical membrane-spanning segment. Residues 173–197 (DFAHSWNESWVEKMEEGNSRCWYAA) are Cytoplasmic-facing. The helical transmembrane segment at 198-218 (LLSATALNYLLSLVAVVLFFV) threads the bilayer. The Lumenal portion of the chain corresponds to 219 to 231 (YYTHPASCAENKA). Residues 232–252 (FISVNMLLCIGASVMSILPKI) traverse the membrane as a helical segment. The Cytoplasmic segment spans residues 253 to 259 (QESQPRS). The chain crosses the membrane as a helical span at residues 260–280 (GLLQSSVITVYTMYLTWSAMT). The Lumenal segment spans residues 281-309 (NEPETNCNPSLLSIIGFNTTRPIPKDGQS). The helical transmembrane segment at 310–330 (VQWWHPQGIIGLVLFLLCVFY) threads the bilayer. The Cytoplasmic segment spans residues 331 to 387 (SSIRTSNNSQVNKLTLTSDESTLIEDGNGRSDGSLDDGDGIHRAVDNERDGVTYSYS). Ser351 carries the post-translational modification Phosphoserine. Thr352 carries the phosphothreonine modification. 2 positions are modified to phosphoserine: Ser361 and Ser364. A helical transmembrane segment spans residues 388–408 (FFHFMLFLASLYIMMTLTNWY). Residues 409-426 (RYEPSREMKSQWTAVWVK) lie on the Lumenal side of the membrane. A helical transmembrane segment spans residues 427–447 (ISSSWIGLVLYVWTLVAPLVL). Over 448–453 (TNRDFD) the chain is Cytoplasmic.

The protein belongs to the TDE1 family. In terms of assembly, interacts with SPTLC1. As to expression, highly expressed in the neuronal populations such as Purkinje cells in the cerebellum, brainstem and spinal motor neurons, locus coeruleus and raphe nuclei.

Its subcellular location is the endoplasmic reticulum membrane. In terms of biological role, enhances the incorporation of serine into phosphatidylserine and sphingolipids. The polypeptide is Serine incorporator 1 (Serinc1) (Mus musculus (Mouse)).